A 241-amino-acid chain; its full sequence is ATP synthase subunit a (241 aa).

8 consecutive transmembrane segments (helical) span residues 29–49 (NSSFFTMISVILMILFLLFGI), 54–74 (VIPGYLQAAVEYVYDFVISII), 86–106 (IPLIFTVFIFILSCNLVGVLP), 114–134 (HVIVTFALSMVVFIYITIVGF), 153–173 (WLAPIIIIIKLFAYLVRPVSL), 177–197 (LAANMIAGHTIIKVIAGFIVN), 200–220 (IFFTPAPFLFIIALIGFEVFV), and 221–241 (AILQAYIFTILTCVYLSDAVK).

It belongs to the ATPase A chain family. As to quaternary structure, F-type ATPases have 2 components, CF(1) - the catalytic core - and CF(0) - the membrane proton channel. CF(1) has five subunits: alpha(3), beta(3), gamma(1), delta(1), epsilon(1). CF(0) has three main subunits: a(1), b(2) and c(9-12). The alpha and beta chains form an alternating ring which encloses part of the gamma chain. CF(1) is attached to CF(0) by a central stalk formed by the gamma and epsilon chains, while a peripheral stalk is formed by the delta and b chains.

It localises to the cell membrane. Key component of the proton channel; it plays a direct role in the translocation of protons across the membrane. This Wolbachia pipientis wMel protein is ATP synthase subunit a.